The chain runs to 357 residues: Homoserine kinase (357 aa).

Lysine 133 is covalently cross-linked (Glycyl lysine isopeptide (Lys-Gly) (interchain with G-Cter in ubiquitin)).

The protein belongs to the GHMP kinase family. Homoserine kinase subfamily. In terms of assembly, homodimer.

It catalyses the reaction L-homoserine + ATP = O-phospho-L-homoserine + ADP + H(+). It participates in amino-acid biosynthesis; L-threonine biosynthesis; L-threonine from L-aspartate: step 4/5. Its function is as follows. Commits homoserine to the threonine biosynthesis pathway by catalyzing its O-phosphorylation. In Saccharomyces cerevisiae (strain ATCC 204508 / S288c) (Baker's yeast), this protein is Homoserine kinase (THR1).